Here is a 322-residue protein sequence, read N- to C-terminus: Serine protease Lpg1137 (322 aa).

Serine 68 is a catalytic residue.

The protein localises to the secreted. It is found in the host mitochondrion membrane. Serine protease effector that inhibits host cell autophagy by targeting SNX17. Localizes to the host endoplasmic reticulum-mitochondria contact site and catalyzes degradation of host SNX17, thereby impairing endoplasmic reticulum-mitochondria communication, leading to inhibit autophagy as well as staurosporine-induced apoptosis. The chain is Serine protease Lpg1137 from Legionella pneumophila subsp. pneumophila (strain Philadelphia 1 / ATCC 33152 / DSM 7513).